A 595-amino-acid chain; its full sequence is Elongation factor 4 (595 aa).

One can recognise a tr-type G domain in the interval 2–184; it reads KNIRNFSIIA…QIVEKIPAPK (183 aa). GTP-binding positions include 14-19 and 131-134; these read DHGKST and NKID.

The protein belongs to the TRAFAC class translation factor GTPase superfamily. Classic translation factor GTPase family. LepA subfamily.

The protein localises to the cell inner membrane. It catalyses the reaction GTP + H2O = GDP + phosphate + H(+). Functionally, required for accurate and efficient protein synthesis under certain stress conditions. May act as a fidelity factor of the translation reaction, by catalyzing a one-codon backward translocation of tRNAs on improperly translocated ribosomes. Back-translocation proceeds from a post-translocation (POST) complex to a pre-translocation (PRE) complex, thus giving elongation factor G a second chance to translocate the tRNAs correctly. Binds to ribosomes in a GTP-dependent manner. This is Elongation factor 4 from Ruthia magnifica subsp. Calyptogena magnifica.